The primary structure comprises 266 residues: PTS system sorbose-specific EIIC component (266 aa).

Residues 1–237 form the PTS EIIC type-4 domain; sequence MEISTLQIIA…GGVGVIIALI (237 aa). 7 helical membrane passes run 3 to 23, 33 to 53, 79 to 99, 100 to 120, 151 to 171, 183 to 203, and 219 to 239; these read ISTL…MGSV, LIAC…VMLG, IISA…IAIA, LPVA…TVVF, VAIP…SSML, QIAG…MMGV, and YLDF…LIYI.

Its subcellular location is the cell inner membrane. Its function is as follows. The phosphoenolpyruvate-dependent sugar phosphotransferase system (PTS), a major carbohydrate active transport system, catalyzes the phosphorylation of incoming sugar substrates concomitant with their translocation across the cell membrane. The enzyme II SorABFM PTS system is involved in L-sorbose transport. In Klebsiella pneumoniae, this protein is PTS system sorbose-specific EIIC component.